We begin with the raw amino-acid sequence, 271 residues long: Acetylglutamate kinase (271 aa).

Substrate contacts are provided by residues 41-42, R63, and N166; that span reads GG.

The protein belongs to the acetylglutamate kinase family. ArgB subfamily.

It is found in the cytoplasm. The enzyme catalyses N-acetyl-L-glutamate + ATP = N-acetyl-L-glutamyl 5-phosphate + ADP. The protein operates within amino-acid biosynthesis; L-arginine biosynthesis; N(2)-acetyl-L-ornithine from L-glutamate: step 2/4. Catalyzes the ATP-dependent phosphorylation of N-acetyl-L-glutamate. The sequence is that of Acetylglutamate kinase from Anaeromyxobacter sp. (strain Fw109-5).